The following is a 147-amino-acid chain: Small ribosomal subunit protein bS6 (147 aa).

The segment at 107–147 (KEGRERKARPARAERRDDTEAEDLSDEEGVEAEDFEEEQGV) is disordered. The segment covering 125 to 147 (TEAEDLSDEEGVEAEDFEEEQGV) has biased composition (acidic residues).

This sequence belongs to the bacterial ribosomal protein bS6 family.

In terms of biological role, binds together with bS18 to 16S ribosomal RNA. The protein is Small ribosomal subunit protein bS6 of Cellvibrio japonicus (strain Ueda107) (Pseudomonas fluorescens subsp. cellulosa).